We begin with the raw amino-acid sequence, 142 residues long: uncharacterized protein (142 aa).

A run of 2 helical transmembrane segments spans residues 75-97 (VFFR…YIVA) and 107-124 (LSIV…KLFY).

Its subcellular location is the cell membrane. This is an uncharacterized protein from Archaeoglobus fulgidus (strain ATCC 49558 / DSM 4304 / JCM 9628 / NBRC 100126 / VC-16).